A 313-amino-acid chain; its full sequence is GTPase Era (313 aa).

Residues Arg-20–Glu-187 form the Era-type G domain. The segment at Gly-28–Ser-35 is G1. Gly-28–Ser-35 serves as a coordination point for GTP. Residues Gln-54–Ala-58 form a G2 region. Residues Asp-75–Gly-78 form a G3 region. Residues Asp-75 to Ile-79 and Asn-137 to Asp-140 each bind GTP. The G4 stretch occupies residues Asn-137 to Asp-140. A G5 region spans residues Ile-166–Ala-168. A KH type-2 domain is found at Leu-218–Glu-295.

It belongs to the TRAFAC class TrmE-Era-EngA-EngB-Septin-like GTPase superfamily. Era GTPase family. As to quaternary structure, monomer.

Its subcellular location is the cytoplasm. It localises to the cell inner membrane. In terms of biological role, an essential GTPase that binds both GDP and GTP, with rapid nucleotide exchange. Plays a role in 16S rRNA processing and 30S ribosomal subunit biogenesis and possibly also in cell cycle regulation and energy metabolism. The sequence is that of GTPase Era from Rhizobium meliloti (strain 1021) (Ensifer meliloti).